A 204-amino-acid chain; its full sequence is Small ribosomal subunit protein uS4 (204 aa).

The S4 RNA-binding domain occupies 93–156 (SRLSSVLYHS…AKIPVVVEAE (64 aa)).

This sequence belongs to the universal ribosomal protein uS4 family. As to quaternary structure, part of the 30S ribosomal subunit. Contacts protein S5. The interaction surface between S4 and S5 is involved in control of translational fidelity.

Its function is as follows. One of the primary rRNA binding proteins, it binds directly to 16S rRNA where it nucleates assembly of the body of the 30S subunit. In terms of biological role, with S5 and S12 plays an important role in translational accuracy. The chain is Small ribosomal subunit protein uS4 from Wolbachia pipientis wMel.